A 188-amino-acid chain; its full sequence is MINKIDNIQTDSEIHMKKCIKNFKTNINNIHIGRISPNILNNIRVDYYGISTPLSQVANAIVEDSRTLAITVFDHQLIKSTEKAIFMSDLELIPISYGNTIRVTLPALTEERRHTLIKMVRTEAEKSKIAVRSVRRIANDKTKILLKNKEINEDEEHFFQNEIQKLTNIWIKEIDIILAEKESELMKF.

This sequence belongs to the RRF family.

Its subcellular location is the cytoplasm. Its function is as follows. Responsible for the release of ribosomes from messenger RNA at the termination of protein biosynthesis. May increase the efficiency of translation by recycling ribosomes from one round of translation to another. This Blochmanniella pennsylvanica (strain BPEN) protein is Ribosome-recycling factor.